An 835-amino-acid polypeptide reads, in one-letter code: Transcription intermediary factor 1-beta (835 aa).

A compositionally biased stretch (low complexity) spans 14–24 (AATAASAASGS). The interval 14 to 57 (AATAASAASGSPGSGEGSAGGEKRPAASSAAAASASASSPAGGG) is disordered. Residues Ser-24, Ser-27, and Ser-31 each carry the phosphoserine modification. Lys-36 participates in a covalent cross-link: Glycyl lysine isopeptide (Lys-Gly) (interchain with G-Cter in SUMO2). Over residues 39–53 (AASSAAAASASASSP) the composition is skewed to low complexity. Position 52 is a phosphoserine (Ser-52). Residues 67–123 (CGVCRERLRPERDPRLLPCLHSACSACLGPATPAAANNSGDGGSAGDGAMVDCPVCK) form an RING-type zinc finger. Residue Lys-129 forms a Glycyl lysine isopeptide (Lys-Gly) (interchain with G-Cter in SUMO2) linkage. Position 140 is a phosphoserine (Ser-140). The B box-type 1; atypical zinc finger occupies 150 to 197 (DANQCCTSCEDNAPATSYCVECSEPLCETCVEAHQRVKYTKDHTVRST). The Zn(2+) site is built by Cys-155, Cys-158, Cys-179, and His-183. Residue Lys-201 forms a Glycyl lysine isopeptide (Lys-Gly) (interchain with G-Cter in SUMO2) linkage. Residues 206-247 (ERTVYCNVHKHEPLVLFCESCDTLTCRDCQLNAHKDHQYQFL) form a B box-type 2 zinc finger. Zn(2+)-binding residues include Cys-211, His-214, Cys-234, and His-239. A leucine zipper alpha helical coiled-coil region region spans residues 248 to 378 (EDAVRNQRKL…LIYFQLHRAL (131 aa)). The interval 249–378 (DAVRNQRKLL…LIYFQLHRAL (130 aa)) is interaction with MAGEC2. Residues Lys-256 and Lys-263 each participate in a glycyl lysine isopeptide (Lys-Gly) (interchain with G-Cter in SUMO2) cross-link. An N6-acetyllysine modification is found at Lys-268. Lys-274 participates in a covalent cross-link: Glycyl lysine isopeptide (Lys-Gly) (interchain with G-Cter in SUMO2). N6-acetyllysine; alternate is present on Lys-306. Lys-306 is covalently cross-linked (Glycyl lysine isopeptide (Lys-Gly) (interchain with G-Cter in SUMO2); alternate). Residue Lys-321 forms a Glycyl lysine isopeptide (Lys-Gly) (interchain with G-Cter in SUMO2) linkage. Residue Lys-342 is modified to N6-acetyllysine. Lys-368 participates in a covalent cross-link: Glycyl lysine isopeptide (Lys-Gly) (interchain with G-Cter in SUMO2). The tract at residues 368–372 (KLIYF) is involved in binding PPP1CA. Position 379 is an N6-acetyllysine; alternate (Lys-379). Lys-379 participates in a covalent cross-link: Glycyl lysine isopeptide (Lys-Gly) (interchain with G-Cter in SUMO2); alternate. Lys-379 participates in a covalent cross-link: Glycyl lysine isopeptide (Lys-Gly) (interchain with G-Cter in SUMO1); alternate. Lys-409 is covalently cross-linked (Glycyl lysine isopeptide (Lys-Gly) (interchain with G-Cter in SUMO2)). The interval 413 to 481 (ERPGTNSTGP…SRSGEGEVSG (69 aa)) is disordered. At Ser-419 the chain carries Phosphoserine. Lys-436 participates in a covalent cross-link: Glycyl lysine isopeptide (Lys-Gly) (interchain with G-Cter in SUMO2). Over residues 436-445 (KQGSGSSQPM) the composition is skewed to polar residues. Phosphoserine occurs at positions 439 and 441. Lys-470 is covalently cross-linked (Glycyl lysine isopeptide (Lys-Gly) (interchain with G-Cter in SUMO2); alternate). Residue Lys-470 forms a Glycyl lysine isopeptide (Lys-Gly) (interchain with G-Cter in SUMO1); alternate linkage. At Arg-471 the chain carries Citrulline. Ser-472 is subject to Phosphoserine. Position 473 is a citrulline (Arg-473). Phosphoserine is present on residues Ser-474, Ser-480, and Ser-490. The tract at residues 477-514 (GEVSGLMRKVPRVSLERLDLDLTSDSQPPVFKVFPGST) is HP1 box. Residues 482–495 (LMRKVPRVSLERLD) carry the PxVxL motif motif. Thr-499 carries the post-translational modification Phosphothreonine. The residue at position 502 (Ser-502) is a Phosphoserine. Residue Lys-508 forms a Glycyl lysine isopeptide (Lys-Gly) (interchain with G-Cter in SUMO2) linkage. A Glycyl lysine isopeptide (Lys-Gly) (interchain with G-Cter in SUMO2); alternate cross-link involves residue Lys-555. Residue Lys-555 forms a Glycyl lysine isopeptide (Lys-Gly) (interchain with G-Cter in SUMO); alternate linkage. Residue Lys-576 forms a Glycyl lysine isopeptide (Lys-Gly) (interchain with G-Cter in SUMO2) linkage. Phosphoserine is present on Ser-595. Residues 626 to 673 (ATICRVCQKPGDLVMCNQCEFCFHLDCHLPSLQDVPGEEWSCSLCHVL) form a PHD-type zinc finger. Residue Lys-677 forms a Glycyl lysine isopeptide (Lys-Gly) (interchain with G-Cter in SUMO) linkage. Phosphoserine is present on residues Ser-684, Ser-690, and Ser-698. The Bromo domain occupies 696–800 (KLSPANQRKC…RFFETRMNDA (105 aa)). Lys-751 is covalently cross-linked (Glycyl lysine isopeptide (Lys-Gly) (interchain with G-Cter in SUMO2); alternate). Lys-751 is covalently cross-linked (Glycyl lysine isopeptide (Lys-Gly) (interchain with G-Cter in SUMO1); alternate). A Glycyl lysine isopeptide (Lys-Gly) (interchain with G-Cter in SUMO); alternate cross-link involves residue Lys-751. The residue at position 753 (Ser-753) is a Phosphoserine. The residue at position 756 (Tyr-756) is a Phosphotyrosine. At Ser-758 the chain carries Phosphoserine. An N6-acetyllysine; alternate mark is found at Lys-771, Lys-775, and Lys-780. Residues Lys-771, Lys-775, and Lys-780 each participate in a glycyl lysine isopeptide (Lys-Gly) (interchain with G-Cter in SUMO2); alternate cross-link. Lys-780 participates in a covalent cross-link: Glycyl lysine isopeptide (Lys-Gly) (interchain with G-Cter in SUMO1); alternate. The residue at position 785 (Ser-785) is a Phosphoserine. Lys-805 is covalently cross-linked (Glycyl lysine isopeptide (Lys-Gly) (interchain with G-Cter in SUMO2)). The residue at position 825 (Ser-825) is a Phosphoserine; by ATM and ATR and dsDNA kinase.

This sequence belongs to the TRIM/RBCC family. In terms of assembly, interacts with ZNF382. Interacts with SETX. Oligomer; the RBCC domain homotrimerizes and interacts with one molecule of KRAB to form the KRAB-KAP1 corepressor complex. Binding to a KRAB domain is an absolute requirement for silencing gene expression. Interacts with CEBPB and NR3C1. Interacts with a number of KRAB-ZFP proteins including ZNF10, ZFP53, ZFP68 and ZNF256. Interacts with NCOR1, NR3C1 and CHD3. Interacts with CEBPB (via the RING-type and PHD-type zinc fingers). Component of a ternary complex that includes TRIM28, a HP1 protein (CBX1, CBX3 OR CBX5), a KRAB domain-containing protein, and DNA. Interacts with CBX5 (via the PxVxL motif); the interaction occurs in interphase nuclei and competes for binding POGZ. Interacts with POGZ; the interaction competes for interaction with CBX5. Interacts with SETDB1; the interaction is enhanced by KAP1 sumoylation, stimulates SETDB1 histone methyltransferase activity and gene silencing. Interacts (via the PHD-type zinc finger) with UBE2I; the interaction is required for sumoylation and repressor activity. Component of the TRIM28/KAP1-ERBB4-MDM2 complex involved in connecting growth factor and DNA damage responses. Interacts directly with ERBB4; the interaction represses ERBB4-mediated transcription activity. Interacts with MDM2; the interaction contributes to p53/TP53 inactivation. Component of the TRIM28/KAP1-MDM2-p53/TP53; involved in regulating p53/TP53 stabilization and activity. Interacts (via the leucine zipper alpha helical coiled-coil) with E2F1 (central region); the interaction inhibits E2F1 acetylation and transcriptional activity. Interacts with PPP1CA; the interaction dephosphorylates TRIM28 at Ser-824 and forms a complex at the p21 promoter site. Interacts with PPP1CB; the interaction is weak but is increased on dephosphorylation at Ser-824. Interacts with SMARCAD1. Interacts with, and sumoylates IRF7. Interacts with MAGEC2. Part of a complex composed of TRIM28, HDAC1, HDAC2 and EHMT2. Interacts with AICDA. The large PER complex involved in the histone methylation is composed of at least PER2, CBX3, TRIM28, SUV39H1 and/or SUV39H2; CBX3 mediates the formation of the complex. Interacts with NR4A3; the interactions potentiates NR4A3 activity on NurRE promoter. Interacts (unphosphorylated or phosphorylated form) with ZBTB1 (via BTB domain). Probably part of a corepressor complex containing ZNF304, TRIM28, SETDB1 and DNMT1. Interacts with ATRX. Forms a complex with ATRX, SETDB1 and ZNF274. Interacts with ZFP568; the interaction mediates ZFP568 transcriptional repression activity. Interacts with RRP1B. Interacts with CRY1. Interacts with ZNF263; recruited to the SIX3 promoter along with other proteins involved in chromatin modification and transcriptional corepression where it contributes to transcriptional repression. Interacts with CYREN (via XLF motif). Interacts with TRIM17; this interaction prevents TRIM28 activity. Interacts with ZNF746. Interacts with PHF13. Interacts with ZNF354C. Interacts with ZNF432; the interaction is independent of PARP1. ATM-induced phosphorylation on Ser-825 represses sumoylation leading to the de-repression of expression of a subset of genes involved in cell cycle control and apoptosis in response to genotoxic stress. Dephosphorylation by the phosphatases, PPP1CA and PP1CB forms, allows sumoylation and expression of TRIM28 target genes. Post-translationally, sumoylation/desumoylation events regulate TRIM28-mediated transcriptional repression. Sumoylation is required for interaction with CHD3 and SETDB1 and the corepressor activity. Represses and is repressed by Ser-824 phosphorylation. Enhances the TRIM28 corepressor activity, inhibiting transcriptional activity of a number of genes including GADD45A and CDKN1A/p21. Lys-555, Lys-780 and Lys-805 are the major sites of sumoylation. In response to Dox-induced DNA damage, enhanced phosphorylation on Ser-825 prevents sumoylation and allows de-repression of CDKN1A/p21. In terms of processing, auto-ubiquitinated; enhanced by MAGEA2 and MAGEC2. Citrullinated by PADI4. Post-translationally, ADP-ribosylated by SIRT6, promoting TRIM28/KAP1 interaction with CBX5, thereby contributing to the packaging of LINE-1 retrotransposon elements into transcriptionally repressive heterochromatin.

Its subcellular location is the nucleus. It carries out the reaction S-ubiquitinyl-[E2 ubiquitin-conjugating enzyme]-L-cysteine + [acceptor protein]-L-lysine = [E2 ubiquitin-conjugating enzyme]-L-cysteine + N(6)-ubiquitinyl-[acceptor protein]-L-lysine.. Its pathway is protein modification; protein sumoylation. In terms of biological role, nuclear corepressor for KRAB domain-containing zinc finger proteins (KRAB-ZFPs). Mediates gene silencing by recruiting CHD3, a subunit of the nucleosome remodeling and deacetylation (NuRD) complex, and SETDB1 (which specifically methylates histone H3 at 'Lys-9' (H3K9me)) to the promoter regions of KRAB target genes. Enhances transcriptional repression by coordinating the increase in H3K9me, the decrease in histone H3 'Lys-9 and 'Lys-14' acetylation (H3K9ac and H3K14ac, respectively) and the disposition of HP1 proteins to silence gene expression. Recruitment of SETDB1 induces heterochromatinization. May play a role as a coactivator for CEBPB and NR3C1 in the transcriptional activation of ORM1. Also a corepressor for ERBB4. Inhibits E2F1 activity by stimulating E2F1-HDAC1 complex formation and inhibiting E2F1 acetylation. May serve as a partial backup to prevent E2F1-mediated apoptosis in the absence of RB1. Important regulator of CDKN1A/p21(CIP1). Has E3 SUMO-protein ligase activity toward itself via its PHD-type zinc finger. Also specifically sumoylates IRF7, thereby inhibiting its transactivation activity. Ubiquitinates p53/TP53 leading to its proteasomal degradation; the function is enhanced by MAGEC2 and MAGEA2, and possibly MAGEA3 and MAGEA6. Mediates the nuclear localization of KOX1, ZNF268 and ZNF300 transcription factors. In association with isoform 2 of ZFP90, is required for the transcriptional repressor activity of FOXP3 and the suppressive function of regulatory T-cells (Treg). Probably forms a corepressor complex required for activated KRAS-mediated promoter hypermethylation and transcriptional silencing of tumor suppressor genes (TSGs) or other tumor-related genes in colorectal cancer (CRC) cells. Required to maintain a transcriptionally repressive state of genes in undifferentiated embryonic stem cells (ESCs). In ESCs, in collaboration with SETDB1, is also required for H3K9me3 and silencing of endogenous and introduced retroviruses in a DNA-methylation independent-pathway. Associates at promoter regions of tumor suppressor genes (TSGs) leading to their gene silencing. The SETDB1-TRIM28-ZNF274 complex may play a role in recruiting ATRX to the 3'-exons of zinc finger genes with atypical chromatin signatures to establish or maintain/protect H3K9me3 at these transcriptionally active regions. The chain is Transcription intermediary factor 1-beta from Rattus norvegicus (Rat).